We begin with the raw amino-acid sequence, 208 residues long: MKAVIPYKKSSAKSRLSPVLTREEREEFVDLMLNQVIDTLKEAGVGTIDILSPSMYGLENMTKANVLLDKNDLNEALNGYLEQAEEPVIIVMADLPLLSPDHVKGITSTKEDVCIVPGKGGGTNALFIKNPSCYRVRYYGSSFLTHCSIAEKTGQSVEVYDSFFAGTDIDEPEDLVELLIHGSGAAKEYISKKFRLEMSRGRVGLVHI.

Belongs to the CofC family. Homodimer.

The enzyme catalyses (2S)-2-phospholactate + GTP + H(+) = (2S)-lactyl-2-diphospho-5'-guanosine + diphosphate. The protein operates within cofactor biosynthesis; coenzyme F420 biosynthesis. Its function is as follows. Guanylyltransferase that catalyzes the activation of (2S)-2-phospholactate (2-PL) as (2S)-lactyl-2-diphospho-5'-guanosine, via the condensation of 2-PL with GTP. It is involved in the biosynthesis of coenzyme F420, a hydride carrier cofactor. In Methanosarcina barkeri (strain Fusaro / DSM 804), this protein is 2-phospho-L-lactate guanylyltransferase.